The following is a 322-amino-acid chain: Picrinine-N-methytransferase (322 aa).

Positions 103–112 are SAM motif I; it reads MLDVGCGLGG. The tract at residues 166-174 is SAM motif II; that stretch reads GTFDLVFTI. The interval 193 to 202 is SAM motif III; it reads VAAPGAPVVI.

The protein belongs to the class I-like SAM-binding methyltransferase superfamily. gTMT family. Homodimer. In terms of tissue distribution, accumulates in tissues actively synthesizing monoterpenoid indole alkaloids (MIAs) (at protein level). Mainly expressed in young leaves, but barely in roots and stems.

It is found in the cytoplasm. Its subcellular location is the cytosol. The enzyme catalyses picrinine + S-adenosyl-L-methionine = ervincine + S-adenosyl-L-homocysteine + H(+). The protein operates within alkaloid biosynthesis; vindoline biosynthesis. Its function is as follows. S-adenosyl-L-methionine-dependent N-methyltransferase involved in the biosynthesis of biologically active monoterpenoid indole alkaloids (MIAs) natural products including vindoline. Catalyzes the conversion of picrinine to N-methylpicrinine (ervincine). Also accepts, with low efficiency, 21-hydroxycyclolochnericine and norajmaline as substrates. In Vinca minor (Common periwinkle), this protein is Picrinine-N-methytransferase.